Here is a 497-residue protein sequence, read N- to C-terminus: Probable cytosol aminopeptidase (497 aa).

Mn(2+) contacts are provided by Lys267 and Asp272. Lys279 is a catalytic residue. Positions 290, 349, and 351 each coordinate Mn(2+). The active site involves Arg353.

The protein belongs to the peptidase M17 family. The cofactor is Mn(2+).

It localises to the cytoplasm. It carries out the reaction Release of an N-terminal amino acid, Xaa-|-Yaa-, in which Xaa is preferably Leu, but may be other amino acids including Pro although not Arg or Lys, and Yaa may be Pro. Amino acid amides and methyl esters are also readily hydrolyzed, but rates on arylamides are exceedingly low.. The enzyme catalyses Release of an N-terminal amino acid, preferentially leucine, but not glutamic or aspartic acids.. Functionally, presumably involved in the processing and regular turnover of intracellular proteins. Catalyzes the removal of unsubstituted N-terminal amino acids from various peptides. This Pseudomonas putida (strain ATCC 47054 / DSM 6125 / CFBP 8728 / NCIMB 11950 / KT2440) protein is Probable cytosol aminopeptidase.